We begin with the raw amino-acid sequence, 318 residues long: Ribonuclease Z (318 aa).

Positions 62, 64, 66, 67, 144, 215, and 273 each coordinate Zn(2+). The active-site Proton acceptor is the D66.

The protein belongs to the RNase Z family. In terms of assembly, homodimer. It depends on Zn(2+) as a cofactor.

The enzyme catalyses Endonucleolytic cleavage of RNA, removing extra 3' nucleotides from tRNA precursor, generating 3' termini of tRNAs. A 3'-hydroxy group is left at the tRNA terminus and a 5'-phosphoryl group is left at the trailer molecule.. In terms of biological role, zinc phosphodiesterase, which displays some tRNA 3'-processing endonuclease activity. Probably involved in tRNA maturation, by removing a 3'-trailer from precursor tRNA. This is Ribonuclease Z from Prochlorococcus marinus (strain MIT 9313).